A 382-amino-acid chain; its full sequence is Chaperone protein DnaJ (382 aa).

Residues 5–70 enclose the J domain; that stretch reads DYYEVLGVSR…DKKAAYDRYG (66 aa). Residues 141-219 form a CR-type zinc finger; the sequence is GVQKTINVPA…CHGAGRVEKE (79 aa). Zn(2+)-binding residues include Cys-154, Cys-157, Cys-171, Cys-174, Cys-193, Cys-196, Cys-207, and Cys-210. CXXCXGXG motif repeat units lie at residues 154 to 161, 171 to 178, 193 to 200, and 207 to 214; these read CDACKGTG, CPTCSGMG, CPTCNGMG, and CKVCHGAG.

The protein belongs to the DnaJ family. As to quaternary structure, homodimer. Zn(2+) is required as a cofactor.

The protein localises to the cytoplasm. Participates actively in the response to hyperosmotic and heat shock by preventing the aggregation of stress-denatured proteins and by disaggregating proteins, also in an autonomous, DnaK-independent fashion. Unfolded proteins bind initially to DnaJ; upon interaction with the DnaJ-bound protein, DnaK hydrolyzes its bound ATP, resulting in the formation of a stable complex. GrpE releases ADP from DnaK; ATP binding to DnaK triggers the release of the substrate protein, thus completing the reaction cycle. Several rounds of ATP-dependent interactions between DnaJ, DnaK and GrpE are required for fully efficient folding. Also involved, together with DnaK and GrpE, in the DNA replication of plasmids through activation of initiation proteins. The chain is Chaperone protein DnaJ from Cereibacter sphaeroides (strain ATCC 17029 / ATH 2.4.9) (Rhodobacter sphaeroides).